A 431-amino-acid chain; its full sequence is Divergent protein kinase domain 1B (431 aa).

Topologically, residues 1–30 are cytoplasmic; sequence MRRLRRLVHLVLLCPFSKGLQGRLPGLRVK. Positions 5 to 6 match the May mediate ER retention motif; sequence RR. A helical transmembrane segment spans residues 31–51; sequence YVLLVWLGIFVGSWMVYVHYS. The Lumenal segment spans residues 52-431; sequence SYSELCRGHV…WREISNTNYS (380 aa). 2 disulfides stabilise this stretch: Cys57–Cys94 and Cys62–Cys117.

It belongs to the DIPK family. Among the many cysteines in the lumenal domain, most are probably involved in disulfide bonds.

It is found in the endoplasmic reticulum membrane. The protein is Divergent protein kinase domain 1B of Rattus norvegicus (Rat).